The primary structure comprises 297 residues: Bilin biosynthesis protein MpeU (297 aa).

The protein belongs to the CpcE/RpcE/PecE family.

An enzyme involved in the biosynthesis of bilin. This chain is Bilin biosynthesis protein MpeU (mpeU), found in Synechococcus sp. (strain WH8020).